The sequence spans 67 residues: Large ribosomal subunit protein bL35 (67 aa).

Belongs to the bacterial ribosomal protein bL35 family.

This Gloeothece citriformis (strain PCC 7424) (Cyanothece sp. (strain PCC 7424)) protein is Large ribosomal subunit protein bL35.